The sequence spans 280 residues: Phosphatidylglycerol--prolipoprotein diacylglyceryl transferase (280 aa).

The next 3 helical transmembrane spans lie at 21-41, 54-74, and 88-108; these read WYGI…ISEG, LLLW…VIFE, and IWNG…VLLI. R136 contributes to the a 1,2-diacyl-sn-glycero-3-phospho-(1'-sn-glycerol) binding site. Helical transmembrane passes span 176 to 196, 206 to 226, and 236 to 256; these read QPTF…ILSL, GEVF…VEGM, and IIRV…ILWI.

The protein belongs to the Lgt family.

Its subcellular location is the cell membrane. The catalysed reaction is L-cysteinyl-[prolipoprotein] + a 1,2-diacyl-sn-glycero-3-phospho-(1'-sn-glycerol) = an S-1,2-diacyl-sn-glyceryl-L-cysteinyl-[prolipoprotein] + sn-glycerol 1-phosphate + H(+). The protein operates within protein modification; lipoprotein biosynthesis (diacylglyceryl transfer). Its function is as follows. Catalyzes the transfer of the diacylglyceryl group from phosphatidylglycerol to the sulfhydryl group of the N-terminal cysteine of a prolipoprotein, the first step in the formation of mature lipoproteins. In Lactobacillus acidophilus (strain ATCC 700396 / NCK56 / N2 / NCFM), this protein is Phosphatidylglycerol--prolipoprotein diacylglyceryl transferase.